A 347-amino-acid chain; its full sequence is GMP reductase (347 aa).

An NADP(+)-binding site is contributed by 108-131 (ADFEKTKQILDLNPALNFVCIDVA). K(+) contacts are provided by Gly181 and Gly183. Cys186 (thioimidate intermediate) is an active-site residue. 216–239 (IVSDGGCTTPGDVAKAFGGGADFV) is an NADP(+) binding site.

This sequence belongs to the IMPDH/GMPR family. GuaC type 1 subfamily. As to quaternary structure, homotetramer.

The catalysed reaction is IMP + NH4(+) + NADP(+) = GMP + NADPH + 2 H(+). Its function is as follows. Catalyzes the irreversible NADPH-dependent deamination of GMP to IMP. It functions in the conversion of nucleobase, nucleoside and nucleotide derivatives of G to A nucleotides, and in maintaining the intracellular balance of A and G nucleotides. This is GMP reductase from Escherichia coli O7:K1 (strain IAI39 / ExPEC).